The sequence spans 329 residues: Malate dehydrogenase (329 aa).

12–18 (GAAGQIG) is an NAD(+) binding site. R93 and R99 together coordinate substrate. NAD(+) contacts are provided by residues N106, Q113, and 130 to 132 (TGN). The substrate site is built by N132 and R163. Catalysis depends on H188, which acts as the Proton acceptor.

This sequence belongs to the LDH/MDH superfamily. MDH type 2 family.

The catalysed reaction is (S)-malate + NAD(+) = oxaloacetate + NADH + H(+). Catalyzes the reversible oxidation of malate to oxaloacetate. The chain is Malate dehydrogenase from Mycobacterium ulcerans (strain Agy99).